Consider the following 453-residue polypeptide: Chromosomal replication initiator protein DnaA (453 aa).

The segment at 1–75 is domain I, interacts with DnaA modulators; it reads MSENMEELWS…SLKKISGKQL (75 aa). The interval 75 to 114 is domain II; that stretch reads LKIKFLLPGEKIKMEEQNNENEEKPESTSKKSSQGSEHTT. Residues 87–103 are compositionally biased toward basic and acidic residues; that stretch reads KMEEQNNENEEKPESTS. The interval 87–112 is disordered; sequence KMEEQNNENEEKPESTSKKSSQGSEH. Positions 115–331 are domain III, AAA+ region; it reads WLNPKYTFDT…GGLIRVIAYS (217 aa). ATP-binding residues include G159, G161, K162, and T163. The domain IV, binds dsDNA stretch occupies residues 332-453; the sequence is SMANKKITKE…DEIKNLLHGD (122 aa).

Belongs to the DnaA family. In terms of assembly, oligomerizes as a right-handed, spiral filament on DNA at oriC.

It localises to the cytoplasm. Its function is as follows. Plays an essential role in the initiation and regulation of chromosomal replication. ATP-DnaA binds to the origin of replication (oriC) to initiate formation of the DNA replication initiation complex once per cell cycle. Binds the DnaA box (a 9 base pair repeat at the origin) and separates the double-stranded (ds)DNA. Forms a right-handed helical filament on oriC DNA; dsDNA binds to the exterior of the filament while single-stranded (ss)DNA is stabiized in the filament's interior. The ATP-DnaA-oriC complex binds and stabilizes one strand of the AT-rich DNA unwinding element (DUE), permitting loading of DNA polymerase. After initiation quickly degrades to an ADP-DnaA complex that is not apt for DNA replication. Binds acidic phospholipids. The polypeptide is Chromosomal replication initiator protein DnaA (Natranaerobius thermophilus (strain ATCC BAA-1301 / DSM 18059 / JW/NM-WN-LF)).